The sequence spans 333 residues: Acyl-CoA wax alcohol acyltransferase 2 (333 aa).

3 helical membrane-spanning segments follow: residues 15-35, 38-58, and 130-150; these read VFALFQWALSALVIVTTVIIV, YLVVFTSYWPVTVLMLTWLAF, and TFPGITPYMLTLGAFFWVPFL.

This sequence belongs to the diacylglycerol acyltransferase family. In terms of assembly, monomer. Expressed in Mueller cells of the retina (at protein level). Abundant in tissues rich in sebaceous glands such as the preputial gland and eyelid.

It localises to the endoplasmic reticulum membrane. It catalyses the reaction a long chain fatty alcohol + a fatty acyl-CoA = a wax ester + CoA. The enzyme catalyses all-trans-retinol + an acyl-CoA = an all-trans-retinyl ester + CoA. It carries out the reaction an acyl-CoA + a 1,2-diacyl-sn-glycerol = a triacyl-sn-glycerol + CoA. The catalysed reaction is 9-cis-retinol + a fatty acyl-CoA = 9-cis-retinyl ester + CoA. It catalyses the reaction 11-cis-retinol + a fatty acyl-CoA = 11-cis-retinyl ester + CoA. The enzyme catalyses 13-cis-retinol + a fatty acyl-CoA = 13-cis-retinyl ester + CoA. It carries out the reaction a 1-acylglycerol + an acyl-CoA = a 1,2-diacylglycerol + CoA. The catalysed reaction is 1-O-alkylglycerol + an acyl-CoA = 1-O-alkyl-3-acylglycerol + CoA. It catalyses the reaction a 2-acylglycerol + an acyl-CoA = a 1,2-diacyl-sn-glycerol + CoA. The enzyme catalyses 2-(9Z-octadecenoyl)-glycerol + hexadecanoyl-CoA = 1-hexadecanoyl-2-(9Z-octadecenoyl)-sn-glycerol + CoA. It carries out the reaction 1,2-di-(9Z-octadecenoyl)-sn-glycerol + hexadecanoyl-CoA = 1,2-di-(9Z)-octadecenoyl-3-hexadecanoyl-sn-glycerol + CoA. The catalysed reaction is hexadecan-1-ol + hexadecanoyl-CoA = hexadecanyl hexadecanoate + CoA. It catalyses the reaction hexadecane-1,2-diol + hexadecanoyl-CoA = 2-hydroxyhexadecyl hexadecanoate + CoA. The enzyme catalyses all-trans-retinol + hexadecanoyl-CoA = all-trans-retinyl hexadecanoate + CoA. It carries out the reaction 1,2-di-(9Z-octadecenoyl)-sn-glycerol + (9Z)-octadecenoyl-CoA = 1,2,3-tri-(9Z-octadecenoyl)-glycerol + CoA. The catalysed reaction is hexadecan-1-ol + (9Z)-octadecenoyl-CoA = hexadecanyl (9Z)-octadecenoate + CoA. It catalyses the reaction (9Z)-hexadecen-1-ol + (9Z)-octadecenoyl-CoA = 1-O-(9Z)-hexadecenyl (9Z)-octadecenoate + CoA. The enzyme catalyses octadecan-1-ol + (9Z)-octadecenoyl-CoA = 1-O-octadecyl (9Z)-octadecenoate + CoA. It carries out the reaction (9Z)-octadecen-1-ol + (9Z)-octadecenoyl-CoA = 1-O-(9Z)-octadecenyl (9Z)-octadecenoate + CoA. The catalysed reaction is hexadecan-1-ol + (9Z)-hexadecenoyl-CoA = 1-O-hexadecyl (9Z)-hexadecenoate + CoA. It catalyses the reaction hexadecan-1-ol + octadecanoyl-CoA = hexadecanyl octadecanoate + CoA. The enzyme catalyses 11-cis-retinol + hexadecanoyl-CoA = 11-cis-retinyl hexadecanoate + CoA. It carries out the reaction 1-O-(9Z-octadecenyl)-glycerol + (9Z)-octadecenoyl-CoA = 1-O-(9Z-octadecyl)-3-(9Z-octadecenoyl)-glycerol + CoA. The catalysed reaction is 1-(9Z-octadecenoyl)-glycerol + (9Z)-octadecenoyl-CoA = 1,2-di-(9Z-octadecenoyl)-glycerol + CoA. It catalyses the reaction 11-cis-retinol + tetradecanoyl-CoA = 11-cis-retinyl tetradecanoate + CoA. The enzyme catalyses 9-cis-retinol + tetradecanoyl-CoA = 9-cis-retinyl tetradecanoate + CoA. It carries out the reaction 9-cis-retinol + hexadecanoyl-CoA = 9-cis-retinyl hexadecanoate + CoA. The catalysed reaction is 13-cis-retinol + tetradecanoyl-CoA = 13-cis-retinyl tetradecanoate + CoA. It catalyses the reaction all-trans-retinol + tetradecanoyl-CoA = all-trans-retinyl tetradecanoate + CoA. The enzyme catalyses tetradecan-1-ol + tetradecanoyl-CoA = tetradecanyl tetradecanoate + CoA. Its activity is regulated as follows. 11-cis retinoids act as allosteric modulators of acyl-CoA retinol O-fatty-acyltransferase (ARAT) activity by suppressing esterification of 9-cis, 13-cis, or all-trans retinols concurrently increasing the enzyme specificity toward 11-cis isomer. Its function is as follows. Acyltransferase that catalyzes the formation of ester bonds between fatty alcohols and fatty acyl-CoAs to form wax monoesters. Shows a preference for medium chain acyl-CoAs from C12 to C16 in length and fatty alcohols shorter than C20, as the acyl donor and acceptor, respectively. Also possesses fatty acyl-CoA retinol acyltransferase (ARAT) activity that preferentially esterifies 11-cis-retinol, a chromophore precursor of bleached opsin pigments in cone cells. Shows higher catalytic efficiency toward 11-cis-retinol versus 9-cis-retinol, 13- cis-retinol and all-trans-retinol substrates. In Mus musculus (Mouse), this protein is Acyl-CoA wax alcohol acyltransferase 2 (Awat2).